A 767-amino-acid polypeptide reads, in one-letter code: DNA topoisomerase 1 (767 aa).

Residues 1–23 (MSGDHLHNDSQIEADFRLNDSHK) are compositionally biased toward basic and acidic residues. The disordered stretch occupies residues 1-201 (MSGDHLHNDS…NKKKKPKKEE (201 aa)). The residue at position 2 (Ser-2) is an N-acetylserine. Phosphoserine is present on residues Ser-2 and Ser-10. Residues 24-39 (HKDKHKDREHRHKEHK) are compositionally biased toward basic residues. Positions 40–110 (KDKDKDREKS…DAKIKKEKEN (71 aa)) are enriched in basic and acidic residues. At Ser-59 the chain carries Phosphoserine. A Glycyl lysine isopeptide (Lys-Gly) (interchain with G-Cter in SUMO2) cross-link involves residue Lys-103. A Glycyl lysine isopeptide (Lys-Gly) (interchain with G-Cter in SUMO); alternate cross-link involves residue Lys-105. Residue Lys-105 forms a Glycyl lysine isopeptide (Lys-Gly) (interchain with G-Cter in SUMO2); alternate linkage. Ser-114 is modified (phosphoserine). Residue Lys-119 forms a Glycyl lysine isopeptide (Lys-Gly) (interchain with G-Cter in SUMO); alternate linkage. Lys-119 is covalently cross-linked (Glycyl lysine isopeptide (Lys-Gly) (interchain with G-Cter in SUMO2); alternate). Lys-119 participates in a covalent cross-link: Glycyl lysine isopeptide (Lys-Gly) (interchain with G-Cter in SUMO1); alternate. Positions 131 to 168 (PKEDIKPLKRLRDEDDADYKPKKIKTEDIKKEKKRKSE) are enriched in basic and acidic residues. Residues Lys-136 and Lys-150 each participate in a glycyl lysine isopeptide (Lys-Gly) (interchain with G-Cter in SUMO2) cross-link. Residue Lys-155 forms a Glycyl lysine isopeptide (Lys-Gly) (interchain with G-Cter in SUMO); alternate linkage. Lys-155 is covalently cross-linked (Glycyl lysine isopeptide (Lys-Gly) (interchain with G-Cter in SUMO2); alternate). Residues Lys-160 and Lys-166 each participate in a glycyl lysine isopeptide (Lys-Gly) (interchain with G-Cter in SUMO2) cross-link. Lys-174 participates in a covalent cross-link: Glycyl lysine isopeptide (Lys-Gly) (interchain with G-Cter in SUMO2); alternate. Lys-174 carries the post-translational modification N6-acetyllysine; alternate. The span at 181 to 201 (KDKDKKVAEPDNKKKKPKKEE) shows a compositional bias: basic and acidic residues. A Glycyl lysine isopeptide (Lys-Gly) (interchain with G-Cter in SUMO2) cross-link involves residue Lys-206. Residue Lys-282 is modified to N6-acetyllysine. Residue Lys-338 forms a Glycyl lysine isopeptide (Lys-Gly) (interchain with G-Cter in SUMO2) linkage. Interaction with DNA stretches follow at residues 427–428 (KY) and 490–495 (RAGNEK). In terms of domain architecture, Topo IB-type catalytic spans 434–767 (SSRIKGEKDW…IDMTDEDYEF (334 aa)). Ser-508 is modified (phosphoserine; by CK2). A Glycyl lysine isopeptide (Lys-Gly) (interchain with G-Cter in SUMO2) cross-link involves residue Lys-551. Positions 587–589 (TAK) are interaction with DNA. Residues Lys-644, Lys-702, and Lys-714 each participate in a glycyl lysine isopeptide (Lys-Gly) (interchain with G-Cter in SUMO2) cross-link. Tyr-725 serves as the catalytic O-(3'-phospho-DNA)-tyrosine intermediate.

It belongs to the type IB topoisomerase family. As to quaternary structure, monomer. Interacts with ERCC6. Interacts with TPRN; TPRN interacts with a number of DNA damage response proteins, is recruited to sites of DNA damage and may play a role in DNA damage repair. Post-translationally, sumoylated. Lys-119 is the main site of sumoylation. Sumoylation plays a role in partitioning TOP1 between nucleoli and nucleoplasm. Levels are dramatically increased on camptothecin (CPT) treatment. Phosphorylation at Ser-508 by CK2 increases binding to supercoiled DNA and sensitivity to camptothecin.

It is found in the nucleus. The protein resides in the nucleolus. Its subcellular location is the nucleoplasm. The enzyme catalyses ATP-independent breakage of single-stranded DNA, followed by passage and rejoining.. In terms of biological role, releases the supercoiling and torsional tension of DNA introduced during the DNA replication and transcription by transiently cleaving and rejoining one strand of the DNA duplex. Introduces a single-strand break via transesterification at a target site in duplex DNA. The scissile phosphodiester is attacked by the catalytic tyrosine of the enzyme, resulting in the formation of a DNA-(3'-phosphotyrosyl)-enzyme intermediate and the expulsion of a 5'-OH DNA strand. The free DNA strand then rotates around the intact phosphodiester bond on the opposing strand, thus removing DNA supercoils. Finally, in the religation step, the DNA 5'-OH attacks the covalent intermediate to expel the active-site tyrosine and restore the DNA phosphodiester backbone. Regulates the alternative splicing of tissue factor (F3) pre-mRNA in endothelial cells. Involved in the circadian transcription of the core circadian clock component BMAL1 by altering the chromatin structure around the ROR response elements (ROREs) on the BMAL1 promoter. The protein is DNA topoisomerase 1 (Top1) of Mus musculus (Mouse).